The sequence spans 288 residues: Thymidylate synthase (288 aa).

Arginine 21 serves as a coordination point for dUMP. Asparagine 51 is a (6R)-5,10-methylene-5,6,7,8-tetrahydrofolate binding site. 150-151 (RR) serves as a coordination point for dUMP. Cysteine 170 serves as the catalytic Nucleophile. Residues 190 to 193 (RSGD), asparagine 201, and 231 to 233 (HIY) each bind dUMP. Position 193 (aspartate 193) interacts with (6R)-5,10-methylene-5,6,7,8-tetrahydrofolate. Residue alanine 287 coordinates (6R)-5,10-methylene-5,6,7,8-tetrahydrofolate.

The protein belongs to the thymidylate synthase family. Bacterial-type ThyA subfamily. Homodimer.

The protein resides in the cytoplasm. The catalysed reaction is dUMP + (6R)-5,10-methylene-5,6,7,8-tetrahydrofolate = 7,8-dihydrofolate + dTMP. Its pathway is pyrimidine metabolism; dTTP biosynthesis. In terms of biological role, catalyzes the reductive methylation of 2'-deoxyuridine-5'-monophosphate (dUMP) to 2'-deoxythymidine-5'-monophosphate (dTMP) while utilizing 5,10-methylenetetrahydrofolate (mTHF) as the methyl donor and reductant in the reaction, yielding dihydrofolate (DHF) as a by-product. This enzymatic reaction provides an intracellular de novo source of dTMP, an essential precursor for DNA biosynthesis. This is Thymidylate synthase from Phytoplasma mali (strain AT).